The primary structure comprises 72 residues: Translation initiation factor IF-1 (72 aa).

In terms of domain architecture, S1-like spans 1-72 (MAKQDVIELE…SRGRITYRYK (72 aa)).

This sequence belongs to the IF-1 family. Component of the 30S ribosomal translation pre-initiation complex which assembles on the 30S ribosome in the order IF-2 and IF-3, IF-1 and N-formylmethionyl-tRNA(fMet); mRNA recruitment can occur at any time during PIC assembly.

Its subcellular location is the cytoplasm. In terms of biological role, one of the essential components for the initiation of protein synthesis. Stabilizes the binding of IF-2 and IF-3 on the 30S subunit to which N-formylmethionyl-tRNA(fMet) subsequently binds. Helps modulate mRNA selection, yielding the 30S pre-initiation complex (PIC). Upon addition of the 50S ribosomal subunit IF-1, IF-2 and IF-3 are released leaving the mature 70S translation initiation complex. This Staphylococcus epidermidis (strain ATCC 35984 / DSM 28319 / BCRC 17069 / CCUG 31568 / BM 3577 / RP62A) protein is Translation initiation factor IF-1.